We begin with the raw amino-acid sequence, 194 residues long: MSTTIDVPESSNVAKGKAVLVAPPRPGGWKKGVAIMDFILRLGAIAAALGAAATMGTSDQTLPFFTQFLQFEASYDSFTSFQFFVITMALVGGYLVLSLPFSFVAIIRPHAAGPRLFLIILDTVFLTLTTASGASAAAIVYLAHNGNQDSNWLAICNQFGDFCAQTSSAVVSSFVAVVVLVLLVVLSALALGKR.

At 1–32 the chain is on the cytoplasmic side; the sequence is MSTTIDVPESSNVAKGKAVLVAPPRPGGWKKG. The helical transmembrane segment at 33-53 threads the bilayer; the sequence is VAIMDFILRLGAIAAALGAAA. Residues 54–82 are Extracellular-facing; the sequence is TMGTSDQTLPFFTQFLQFEASYDSFTSFQ. Residues 83–103 traverse the membrane as a helical segment; the sequence is FFVITMALVGGYLVLSLPFSF. At 104–115 the chain is on the cytoplasmic side; sequence VAIIRPHAAGPR. Residues 116–136 traverse the membrane as a helical segment; that stretch reads LFLIILDTVFLTLTTASGASA. The Extracellular portion of the chain corresponds to 137–168; that stretch reads AAIVYLAHNGNQDSNWLAICNQFGDFCAQTSS. A helical membrane pass occupies residues 169–189; the sequence is AVVSSFVAVVVLVLLVVLSAL. Residues 190–194 are Cytoplasmic-facing; sequence ALGKR.

It belongs to the Casparian strip membrane proteins (CASP) family. In terms of assembly, homodimer and heterodimers.

It is found in the cell membrane. Functionally, regulates membrane-cell wall junctions and localized cell wall deposition. Required for establishment of the Casparian strip membrane domain (CSD) and the subsequent formation of Casparian strips, a cell wall modification of the root endodermis that determines an apoplastic barrier between the intraorganismal apoplasm and the extraorganismal apoplasm and prevents lateral diffusion. This is Casparian strip membrane protein 2 from Glycine max (Soybean).